Consider the following 431-residue polypeptide: MKNYIEIVDVYARQILDSRCNPTVEVEVELEDGTVGVAAVPSGASTGAFEAVELRDGDKSKYLGKGVLKAVDNVNTIIADELVGMNVLDQVAIDKTMIELDGTDNKAKLGANAMLGVSLACAKAAANSLGMSLYQYIGGVNAKVLPVPMMNIINGGKHADNNVDLQEFMIMPAGAPSFSEALRMCSEVYHALKSTLKSQGYDTGVGDEGGFAPNLKSNEEAIVVIIEAIKEAGYTPGKDIFIALDPASSEIFEDGKYNLAGEGRVLTPEEMANYYVELAEKYPIISIEDGMAEEDWDGWKILTEKIGNKVQLVGDDLFVTNTERLSKGIKLGVANSILIKLNQIGTLTETLNAIEMAERAGYTAVVSHRSGETEDTTIADLVVAVNAGQIKTGAPARSERVAKYNQLLRIEEELNDMGEYRGLKAFYNINK.

(2R)-2-phosphoglycerate is bound at residue glutamine 166. Glutamate 208 (proton donor) is an active-site residue. Positions 245, 288, and 315 each coordinate Mg(2+). (2R)-2-phosphoglycerate contacts are provided by lysine 340, arginine 369, serine 370, and lysine 391. The active-site Proton acceptor is the lysine 340.

This sequence belongs to the enolase family. Mg(2+) serves as cofactor.

The protein resides in the cytoplasm. It is found in the secreted. It localises to the cell surface. The enzyme catalyses (2R)-2-phosphoglycerate = phosphoenolpyruvate + H2O. It functions in the pathway carbohydrate degradation; glycolysis; pyruvate from D-glyceraldehyde 3-phosphate: step 4/5. Catalyzes the reversible conversion of 2-phosphoglycerate (2-PG) into phosphoenolpyruvate (PEP). It is essential for the degradation of carbohydrates via glycolysis. In Clostridium botulinum (strain Okra / Type B1), this protein is Enolase.